We begin with the raw amino-acid sequence, 200 residues long: Rho-related protein racD (200 aa).

The GTP site is built by Ala-20, Gly-22, Lys-23, Thr-24, Cys-25, Tyr-39, and Thr-42. Residue Thr-24 coordinates Mg(2+). 2 short sequence motifs (switch) span residues 33 to 44 and 64 to 82; these read NEFPKDYVPTVF and DTAGQEDYEQLRPLSYPNT. Position 42 (Thr-42) interacts with Mg(2+). 3 residues coordinate GTP: Lys-123, Asp-125, and Ala-166. At Cys-197 the chain carries Cysteine methyl ester. Residue Cys-197 is the site of S-geranylgeranyl cysteine attachment. A propeptide spans 198 to 200 (removed in mature form); that stretch reads ALL.

The protein belongs to the small GTPase superfamily. Rho family. It depends on Mg(2+) as a cofactor.

The protein resides in the cell membrane. It localises to the cytoplasm. The protein localises to the cytoskeleton. The catalysed reaction is GTP + H2O = GDP + phosphate + H(+). Regulated by guanine nucleotide exchange factors (GEFs) which promote the exchange of bound GDP for free GTP, GTPase activating proteins (GAPs) which increase the GTP hydrolysis activity, and GDP dissociation inhibitors which inhibit the dissociation of the nucleotide from the GTPase. Small GTPase which cycles between active GTP-bound and inactive GDP-bound states. This chain is Rho-related protein racD, found in Entamoeba histolytica (strain ATCC 30459 / HM-1:IMSS / ABRM).